The primary structure comprises 578 residues: Putative multidrug export ATP-binding/permease protein SA1683 (578 aa).

At 1-15 the chain is on the cytoplasmic side; sequence MIKRYLQFVKPYKYR. A helical membrane pass occupies residues 16–36; sequence IFATIIVGIIKFGIPMLIPLL. The 291-residue stretch at 16–306 folds into the ABC transmembrane type-1 domain; sequence IFATIIVGII…LVASFTTLTQ (291 aa). The Extracellular portion of the chain corresponds to 37–59; sequence IKYAIDGVINNHALTTDEKVHHL. The chain crosses the membrane as a helical span at residues 60-80; sequence TIAIGIALFIFVIVRPPIEFI. The Cytoplasmic segment spans residues 81-138; the sequence is RQYLAQWTSNKILYDIRKKLYNHLQALSARFYANNQVGQVISRVINDVEQTKDFILTG. Residues 139-159 traverse the membrane as a helical segment; it reads LMNIWLDCITIIIALSIMFFL. Residues 160–162 lie on the Extracellular side of the membrane; that stretch reads DVK. Residues 163 to 183 traverse the membrane as a helical segment; it reads LTLAALFIFPFYILTVYVFFG. The Cytoplasmic portion of the chain corresponds to 184 to 244; that stretch reads RLRKLTRERS…TRALKHTRWN (61 aa). A helical membrane pass occupies residues 245–263; that stretch reads AYSFAAINTVTDIGPIIVI. Topologically, residues 264 to 269 are extracellular; sequence GVGAYL. Residues 270–287 form a helical membrane-spanning segment; the sequence is AISGSITVGTLAAFVGYL. Over 288 to 578 the chain is Cytoplasmic; that stretch reads ELLFGPLRRL…YEHLYSIQNL (291 aa). The 236-residue stretch at 340 to 575 folds into the ABC transporter domain; sequence IDIDHVSFQY…QGAYEHLYSI (236 aa). Residue 374 to 381 coordinates ATP; sequence GMSGGGKS.

This sequence belongs to the ABC transporter superfamily. Homodimer.

Its subcellular location is the cell membrane. In terms of biological role, may be involved in multidrug export. Transmembrane domains (TMD) form a pore in the cell membrane and the ATP-binding domain (NBD) is responsible for energy generation. The protein is Putative multidrug export ATP-binding/permease protein SA1683 of Staphylococcus aureus (strain N315).